The sequence spans 150 residues: uncharacterized protein (150 aa).

Residues 5 to 66 (LDRTDKMLLE…KPNYKKLNLG (62 aa)) form the HTH asnC-type domain. The segment at residues 24 to 43 (IAALSKKLGIPRTTVHYRIK) is a DNA-binding region (H-T-H motif).

This is an uncharacterized protein from Pyrococcus furiosus (strain ATCC 43587 / DSM 3638 / JCM 8422 / Vc1).